We begin with the raw amino-acid sequence, 159 residues long: Putative 4-hydroxy-4-methyl-2-oxoglutarate aldolase (159 aa).

Substrate is bound by residues 78 to 81 and Arg-100; that span reads GDVI. Asp-101 lines the a divalent metal cation pocket.

It belongs to the class II aldolase/RraA-like family. As to quaternary structure, homotrimer. It depends on a divalent metal cation as a cofactor.

It catalyses the reaction 4-hydroxy-4-methyl-2-oxoglutarate = 2 pyruvate. The enzyme catalyses oxaloacetate + H(+) = pyruvate + CO2. Functionally, catalyzes the aldol cleavage of 4-hydroxy-4-methyl-2-oxoglutarate (HMG) into 2 molecules of pyruvate. Also contains a secondary oxaloacetate (OAA) decarboxylase activity due to the common pyruvate enolate transition state formed following C-C bond cleavage in the retro-aldol and decarboxylation reactions. The polypeptide is Putative 4-hydroxy-4-methyl-2-oxoglutarate aldolase (Mycobacterium sp. (strain JLS)).